The primary structure comprises 311 residues: p-hydroxybenzoic acid efflux pump subunit AaeA (311 aa).

Residues 11-31 traverse the membrane as a helical segment; it reads VGITVLVVVLAVIAIFNVWAF.

Belongs to the membrane fusion protein (MFP) (TC 8.A.1) family.

It localises to the cell inner membrane. Functionally, forms an efflux pump with AaeB. This is p-hydroxybenzoic acid efflux pump subunit AaeA from Yersinia pseudotuberculosis serotype O:3 (strain YPIII).